The chain runs to 517 residues: Ribosome assembly protein 4 (517 aa).

The tract at residues 1 to 25 (MATLAPPPSKRQRREEIQRTQTQQD) is disordered. A ubiquitin-like (UBL) domain region spans residues 34 to 128 (LGSFKANFID…TITLSAEPQA (95 aa)). WD repeat units lie at residues 144-184 (GHGQ…PKFT), 187-226 (GHTGWVLGVSWSPDGKYLATCSMDTTVRVWDPESGKQVNQ), 230-277 (GHAK…HVLS), 278-316 (GHKGSVSCVKWGGTDLIYTGSHDRSVRVWDAVKGTLVHN), 351-397 (EERR…SKPV), 402-441 (GHQNKVNHVQFSPDGTLIASAGWDNSTKLWNARDGKFIKN), 444-483 (GHVAPVYQCAWSADSRLVVTGSKDCTLKVWNVRTGKLAMD), and 486-517 (GHEDEVYAVDWAADGELVASGGKDKAVRTWRN).

This sequence belongs to the NLE1/RSA4 family. Associates with the pre-60S ribosomal particle. Interacts (via WD repeats) with uL18. Interacts (via UBL domain) with MDN1 (via VWFA/MIDAS domain). Interacts (via WD repeats) with NSA2.

Its subcellular location is the nucleus. It is found in the nucleolus. Functionally, involved in ribosome biogenesis. Required for processing and efficient intra-nuclear transport of pre-60S ribosomal subunits. Interacts with the AAA-ATPase Midasin, which is essential for the ATP-dependent dissociation of a group of nonribosomal factors from the pre-60S particle. This is Ribosome assembly protein 4 from Chaetomium thermophilum (strain DSM 1495 / CBS 144.50 / IMI 039719) (Thermochaetoides thermophila).